Here is a 136-residue protein sequence, read N- to C-terminus: Large ribosomal subunit protein uL16 (136 aa).

The protein belongs to the universal ribosomal protein uL16 family. Part of the 50S ribosomal subunit.

In terms of biological role, binds 23S rRNA and is also seen to make contacts with the A and possibly P site tRNAs. This is Large ribosomal subunit protein uL16 from Pelagibacter ubique (strain HTCC1062).